The sequence spans 64 residues: Large ribosomal subunit protein bL35 (64 aa).

This sequence belongs to the bacterial ribosomal protein bL35 family.

In Acinetobacter baylyi (strain ATCC 33305 / BD413 / ADP1), this protein is Large ribosomal subunit protein bL35.